The sequence spans 423 residues: Probable sodium/metabolite cotransporter BASS3, chloroplastic (423 aa).

The N-terminal 45 residues, 1–45, are a transit peptide targeting the chloroplast; the sequence is MAAAVAASSSSSSSSCAAVGVATASHPHRHRQARFVVSPPAPASP. Transmembrane regions (helical) follow at residues 106–126, 138–158, 165–187, 192–214, 231–251, 254–274, 287–307, 318–338, and 380–400; these read ALLPLVVAATAVAALGNPATF, LGGIMLSIGIKLSIDDFALAF, TIGYMAQYIVKPLMGVLIARAFG, FFAGFVLTCCVSGAQLSSYASFL, ISSVVVTPVLTGLLIGSVVPV, IAMAKSILQVVLVPVTLGLLL, PVMPFVAMLCTSLCIGSPLAI, FLLLLPIVTFHIAAFIVGYWI, and VPAACSVVIMAIFGLTLASYW.

Belongs to the bile acid:sodium symporter (BASS) (TC 2.A.28) family.

The protein localises to the membrane. The protein resides in the plastid. It is found in the chloroplast envelope. Its function is as follows. May function as sodium-coupled metabolite transporter across the chloroplast envelope. This Oryza sativa subsp. japonica (Rice) protein is Probable sodium/metabolite cotransporter BASS3, chloroplastic (BASS3).